The sequence spans 341 residues: tRNA N6-adenosine threonylcarbamoyltransferase (341 aa).

Fe cation-binding residues include His117 and His121. Residues 140–144, Asp173, Gly186, and Asn278 contribute to the substrate site; that span reads VVSGG. Asp306 contributes to the Fe cation binding site.

This sequence belongs to the KAE1 / TsaD family. Fe(2+) is required as a cofactor.

The protein localises to the cytoplasm. It carries out the reaction L-threonylcarbamoyladenylate + adenosine(37) in tRNA = N(6)-L-threonylcarbamoyladenosine(37) in tRNA + AMP + H(+). In terms of biological role, required for the formation of a threonylcarbamoyl group on adenosine at position 37 (t(6)A37) in tRNAs that read codons beginning with adenine. Is involved in the transfer of the threonylcarbamoyl moiety of threonylcarbamoyl-AMP (TC-AMP) to the N6 group of A37, together with TsaE and TsaB. TsaD likely plays a direct catalytic role in this reaction. This is tRNA N6-adenosine threonylcarbamoyltransferase from Symbiobacterium thermophilum (strain DSM 24528 / JCM 14929 / IAM 14863 / T).